The sequence spans 225 residues: NAD(P)H-quinone oxidoreductase subunit K, chloroplastic (225 aa).

Positions 43, 44, 108, and 139 each coordinate [4Fe-4S] cluster.

The protein belongs to the complex I 20 kDa subunit family. In terms of assembly, NDH is composed of at least 16 different subunits, 5 of which are encoded in the nucleus. [4Fe-4S] cluster is required as a cofactor.

Its subcellular location is the plastid. It is found in the chloroplast thylakoid membrane. The enzyme catalyses a plastoquinone + NADH + (n+1) H(+)(in) = a plastoquinol + NAD(+) + n H(+)(out). It catalyses the reaction a plastoquinone + NADPH + (n+1) H(+)(in) = a plastoquinol + NADP(+) + n H(+)(out). Its function is as follows. NDH shuttles electrons from NAD(P)H:plastoquinone, via FMN and iron-sulfur (Fe-S) centers, to quinones in the photosynthetic chain and possibly in a chloroplast respiratory chain. The immediate electron acceptor for the enzyme in this species is believed to be plastoquinone. Couples the redox reaction to proton translocation, and thus conserves the redox energy in a proton gradient. The polypeptide is NAD(P)H-quinone oxidoreductase subunit K, chloroplastic (Crucihimalaya wallichii (Rock-cress)).